The following is a 294-amino-acid chain: Survival motor neuron protein (294 aa).

Over residues 1 to 10 the composition is skewed to gly residues; it reads MAMSSGGSGS. A disordered region spans residues 1–32; sequence MAMSSGGSGSGVPEQEDAVLFRRGTGQSDDSD. Residue Ala2 is modified to N-acetylalanine. 3 positions are modified to phosphoserine; by PKA: Ser4, Ser5, and Ser8. The segment at 13–44 is P1 (binding site for GEMIN2); sequence PEQEDAVLFRRGTGQSDDSDIWDDTALIKAYD. Phosphothreonine is present on Thr25. Phosphoserine is present on residues Ser28 and Ser31. A Glycyl lysine isopeptide (Lys-Gly) (interchain with G-Cter in SUMO2) cross-link involves residue Lys51. A disordered region spans residues 60–88; that stretch reads CETSGKSKTTPKRKPAKKNKSQKKNTAAS. Positions 68-82 are enriched in basic residues; that stretch reads TTPKRKPAKKNKSQK. Position 69 is a phosphothreonine (Thr69). Thr85 carries the phosphothreonine; by PKA modification. The Tudor domain occupies 91–151; the sequence is QWKVGDKCSA…LSPICEVANN (61 aa). The required for interaction with RPP20/POP7 stretch occupies residues 97–209; it reads KCSAIWSEDG…MPGPRLGPGK (113 aa). Residues 156-166 show a composition bias toward low complexity; that stretch reads AQENENESQVS. The tract at residues 156–222 is disordered; that stretch reads AQENENESQV…KFNGPPPPPP (67 aa). Position 187 is a phosphoserine; by PKA (Ser187). Positions 194–204 are enriched in pro residues; the sequence is LPPPPPMPGPR. Over residues 206-215 the composition is skewed to low complexity; the sequence is GPGKPGLKFN. A Glycyl lysine isopeptide (Lys-Gly) (interchain with G-Cter in SUMO2) cross-link involves residue Lys209. The tract at residues 240-267 is P2 (binding site for SM B); it reads PPIIPPPPPICPDSLDDADALGSMLISW. The required for interaction with SYNCRIP stretch occupies residues 279–294; it reads GFRQNQKEGRCSHSLN.

Belongs to the SMN family. In terms of assembly, homooligomer; may form higher order homooligomers in the dimer to octamer range. Part of the core SMN complex that contains SMN1, GEMIN2/SIP1, DDX20/GEMIN3, GEMIN4, GEMIN5, GEMIN6, GEMIN7, GEMIN8 and STRAP/UNRIP. Part of the SMN-Sm complex that contains SMN1, GEMIN2/SIP1, DDX20/GEMIN3, GEMIN4, GEMIN5, GEMIN6, GEMIN7, GEMIN8, STRAP/UNRIP and the Sm proteins SNRPB, SNRPD1, SNRPD2, SNRPD3, SNRPE, SNRPF and SNRPG. Component of an import snRNP complex composed of KPNB1, RNUT1, SMN1 and ZNF259. Interacts with DDX20, FBL, NOLA1, RNUT1, SYNCRIP and with several spliceosomal snRNP core Sm proteins, including SNRPB, SNRPD1, SNRPD2, SNRPD3, SNRPE and ILF3. Interacts with GEMIN2; the interaction is direct. Interacts with GEMIN3; the interaction is direct. Interacts with GEMIN8; the interaction is direct. Interacts with SNRPB; the interaction is direct. Interacts (via Tudor domain) with SNRPD1 (via C-terminus); the interaction is direct. Interacts with SNRPD2; the interaction is direct. Interacts (via Tudor domain) with SNRPD3 (via C-terminus); the interaction is direct. Interacts with SNRPE; the interaction is direct. Interacts with OSTF1, LSM10, LSM11 and RPP20/POP7. Interacts (via C-terminal region) with ZPR1 (via C-terminal region). Interacts (via Tudor domain) with COIL. Interacts with SETX; recruits SETX to POLR2A. Interacts with POLR2A (via the C-terminal domain (CTD)). Interacts with PRMT5. Interacts with XRN2. Interacts (via C-terminus) with FMR1 (via C-terminus); the interaction is direct and occurs in a RNA-independent manner. Interacts (via Tudor domain) with SF3B2 ('Arg-508'-methylated form). Interacts with WRAP53/TCAB1. Interacts (via Tudor domain) with ELAVL4 in an RNA-independent manner; the interaction is required for localization of ELAVL4 to RNA granules. Interacts with FRG1.

The protein localises to the nucleus. Its subcellular location is the gem. It localises to the cajal body. It is found in the cytoplasm. The protein resides in the cytoplasmic granule. The protein localises to the perikaryon. Its subcellular location is the cell projection. It localises to the neuron projection. It is found in the axon. The protein resides in the myofibril. The protein localises to the sarcomere. Its subcellular location is the z line. In terms of biological role, the SMN complex catalyzes the assembly of small nuclear ribonucleoproteins (snRNPs), the building blocks of the spliceosome, and thereby plays an important role in the splicing of cellular pre-mRNAs. Most spliceosomal snRNPs contain a common set of Sm proteins SNRPB, SNRPD1, SNRPD2, SNRPD3, SNRPE, SNRPF and SNRPG that assemble in a heptameric protein ring on the Sm site of the small nuclear RNA to form the core snRNP (Sm core). In the cytosol, the Sm proteins SNRPD1, SNRPD2, SNRPE, SNRPF and SNRPG are trapped in an inactive 6S pICln-Sm complex by the chaperone CLNS1A that controls the assembly of the core snRNP. To assemble core snRNPs, the SMN complex accepts the trapped 5Sm proteins from CLNS1A forming an intermediate. Binding of snRNA inside 5Sm ultimately triggers eviction of the SMN complex, thereby allowing binding of SNRPD3 and SNRPB to complete assembly of the core snRNP. Within the SMN complex, SMN1 acts as a structural backbone and together with GEMIN2 it gathers the Sm complex subunits. Ensures the correct splicing of U12 intron-containing genes that may be important for normal motor and proprioceptive neurons development. Also required for resolving RNA-DNA hybrids created by RNA polymerase II, that form R-loop in transcription terminal regions, an important step in proper transcription termination. May also play a role in the metabolism of small nucleolar ribonucleoprotein (snoRNPs). This is Survival motor neuron protein (SMN1) from Pongo abelii (Sumatran orangutan).